Consider the following 447-residue polypeptide: Probable glycine dehydrogenase (decarboxylating) subunit 1 (447 aa).

The protein belongs to the GcvP family. N-terminal subunit subfamily. The glycine cleavage system is composed of four proteins: P, T, L and H. In this organism, the P 'protein' is a heterodimer of two subunits.

The enzyme catalyses N(6)-[(R)-lipoyl]-L-lysyl-[glycine-cleavage complex H protein] + glycine + H(+) = N(6)-[(R)-S(8)-aminomethyldihydrolipoyl]-L-lysyl-[glycine-cleavage complex H protein] + CO2. Its function is as follows. The glycine cleavage system catalyzes the degradation of glycine. The P protein binds the alpha-amino group of glycine through its pyridoxal phosphate cofactor; CO(2) is released and the remaining methylamine moiety is then transferred to the lipoamide cofactor of the H protein. In Bacillus thuringiensis subsp. konkukian (strain 97-27), this protein is Probable glycine dehydrogenase (decarboxylating) subunit 1.